The sequence spans 129 residues: Small ribosomal subunit protein uS9 (129 aa).

This sequence belongs to the universal ribosomal protein uS9 family.

The chain is Small ribosomal subunit protein uS9 from Helicobacter pylori (strain P12).